Here is a 1255-residue protein sequence, read N- to C-terminus: Bifunctional autolysin (1255 aa).

Residues 1–36 (MLGVINRMAKKFNYKLPSMVALTLVGSAVTAHQVQA) form the signal peptide. Disordered stretches follow at residues 110–141 (GDTR…NTNV) and 193–218 (VTTF…KYKP). Residues 199–775 (SAQPRSVAAT…VAQPKTAVKA (577 aa)) are N-acetylmuramoyl-L-alanine amidase. GW domains follow at residues 442–516 (TVAA…YNTA), 518–592 (SPVN…DTAK), 611–685 (TVSS…YNNA), 687–761 (SPVN…VPAA), 783–858 (TTQT…VQNL), 860–935 (KEVK…APTA), and 942–1016 (AAKD…KELI). Residues 776–1255 (YTVTKPQTTQ…GKYFDIPQYK (480 aa)) are endo-beta-N-acetylglucosaminidase.

The protein in the N-terminal section; belongs to the N-acetylmuramoyl-L-alanine amidase 2 family. It in the C-terminal section; belongs to the glycosyl hydrolase 73 family. As to quaternary structure, oligomer; forms a ring structure at the cell surface which is important for efficient partitioning of daughter cells after cell division. Post-translationally, undergoes proteolytic processing to generate the two extracellular lytic enzymes, probably at the septal region on the cell surface.

It localises to the secreted. It carries out the reaction Hydrolyzes the link between N-acetylmuramoyl residues and L-amino acid residues in certain cell-wall glycopeptides.. The catalysed reaction is an N(4)-(oligosaccharide-(1-&gt;3)-[oligosaccharide-(1-&gt;6)]-beta-D-Man-(1-&gt;4)-beta-D-GlcNAc-(1-&gt;4)-alpha-D-GlcNAc)-L-asparaginyl-[protein] + H2O = an oligosaccharide-(1-&gt;3)-[oligosaccharide-(1-&gt;6)]-beta-D-Man-(1-&gt;4)-D-GlcNAc + N(4)-(N-acetyl-beta-D-glucosaminyl)-L-asparaginyl-[protein]. Functionally, endohydrolysis of the di-N-acetylchitobiosyl unit in high-mannose glycopeptides and glycoproteins containing the -[(Man)5(GlcNAc)2]-Asn structure. One N-acetyl-D-glucosamine residue remains attached to the protein; the rest of the oligosaccharide is released intact. Cleaves the peptidoglycan connecting the daughter cells at the end of the cell division cycle, resulting in the separation of the two newly divided cells. Acts as an autolysin in penicillin-induced lysis. This is Bifunctional autolysin (atl) from Staphylococcus aureus (strain Mu3 / ATCC 700698).